A 218-amino-acid chain; its full sequence is MKIILLGAPGAGKGTQSTSIAEHFGLQRISTGDMLRNAAKEGKPLGLEAKKIMDAGQLVSDDIIMALIKECLSKDECSCGVLFDGFPRTIGQAEALRAEEIHIDHVVEIYVQDEEIVKRMSGRRVHLASGRSYHVMFNPPKQEGLDDATGEPLVQRADDSEETVKKRLQIYHAQTAPLVEYYTMLEQKGESNAPRYHKIEGVGTVEEIRNRIFAALES.

Glycine 10–threonine 15 contacts ATP. Residues serine 30–valine 59 are NMP. AMP is bound by residues threonine 31, arginine 36, glutamine 57–valine 59, glycine 85–arginine 88, and glutamine 92. The segment at glycine 122–aspartate 159 is LID. ATP contacts are provided by residues arginine 123 and serine 132–tyrosine 133. Residues arginine 156 and arginine 167 each contribute to the AMP site. Glycine 203 serves as a coordination point for ATP.

The protein belongs to the adenylate kinase family. Monomer.

The protein resides in the cytoplasm. It catalyses the reaction AMP + ATP = 2 ADP. It participates in purine metabolism; AMP biosynthesis via salvage pathway; AMP from ADP: step 1/1. Its function is as follows. Catalyzes the reversible transfer of the terminal phosphate group between ATP and AMP. Plays an important role in cellular energy homeostasis and in adenine nucleotide metabolism. The chain is Adenylate kinase from Chlorobium chlorochromatii (strain CaD3).